Reading from the N-terminus, the 155-residue chain is UPF0735 ACT domain-containing protein CA_C1234 (155 aa).

In terms of domain architecture, ACT spans Thr79 to Met154.

This sequence belongs to the UPF0735 family.

In Clostridium acetobutylicum (strain ATCC 824 / DSM 792 / JCM 1419 / IAM 19013 / LMG 5710 / NBRC 13948 / NRRL B-527 / VKM B-1787 / 2291 / W), this protein is UPF0735 ACT domain-containing protein CA_C1234.